We begin with the raw amino-acid sequence, 583 residues long: Bifunctional lycopene cyclase/phytoene synthase (583 aa).

The interval M1 to N243 is lycopene beta-cyclase. 7 helical membrane passes run F3–L23, K35–I55, I75–L97, Y120–I140, L151–I171, A173–V193, and I221–F241. The segment at T250 to K583 is phytoene synthase.

It in the N-terminal section; belongs to the lycopene beta-cyclase family. In the C-terminal section; belongs to the phytoene/squalene synthase family.

It is found in the membrane. It catalyses the reaction all-trans-lycopene = gamma-carotene. The enzyme catalyses gamma-carotene = all-trans-beta-carotene. The catalysed reaction is 2 (2E,6E,10E)-geranylgeranyl diphosphate = 15-cis-phytoene + 2 diphosphate. It participates in carotenoid biosynthesis; beta-carotene biosynthesis. The protein operates within carotenoid biosynthesis; phytoene biosynthesis; all-trans-phytoene from geranylgeranyl diphosphate: step 1/1. Functionally, bifunctional enzyme that catalyzes the reactions from geranylgeranyl diphosphate to phytoene (phytoene synthase) and lycopene to beta-carotene via the intermediate gamma-carotene (lycopene cyclase). The chain is Bifunctional lycopene cyclase/phytoene synthase from Pyrenophora tritici-repentis (strain Pt-1C-BFP) (Wheat tan spot fungus).